The primary structure comprises 61 residues: Large ribosomal subunit protein uL30 (61 aa).

Belongs to the universal ribosomal protein uL30 family. In terms of assembly, part of the 50S ribosomal subunit.

This Petrotoga mobilis (strain DSM 10674 / SJ95) protein is Large ribosomal subunit protein uL30.